The chain runs to 168 residues: Large ribosomal subunit protein uL11 (168 aa).

Belongs to the universal ribosomal protein uL11 family. As to quaternary structure, part of the ribosomal stalk of the 50S ribosomal subunit. Interacts with L10 and the large rRNA to form the base of the stalk. L10 forms an elongated spine to which L12 dimers bind in a sequential fashion forming a multimeric L10(L12)X complex.

Its function is as follows. Forms part of the ribosomal stalk which helps the ribosome interact with GTP-bound translation factors. This Metallosphaera sedula (strain ATCC 51363 / DSM 5348 / JCM 9185 / NBRC 15509 / TH2) protein is Large ribosomal subunit protein uL11.